A 310-amino-acid chain; its full sequence is Hydroxyacylglutathione hydrolase, mitochondrial (310 aa).

The Zn(2+) site is built by His104, His106, Asp108, His109, His160, and Asp184. Residues 193–195 (KFF), 223–225 (HEY), and 299–302 (RKEK) each bind substrate. His223 contacts Zn(2+).

The protein belongs to the metallo-beta-lactamase superfamily. Glyoxalase II family. As to quaternary structure, monomer. Zn(2+) serves as cofactor.

It localises to the mitochondrion matrix. Its subcellular location is the cytoplasm. The catalysed reaction is an S-(2-hydroxyacyl)glutathione + H2O = a 2-hydroxy carboxylate + glutathione + H(+). It catalyses the reaction (R)-S-lactoylglutathione + H2O = (R)-lactate + glutathione + H(+). In terms of biological role, thiolesterase that catalyzes the hydrolysis of S-D-lactoyl-glutathione to form glutathione and D-lactic acid. The protein is Hydroxyacylglutathione hydrolase, mitochondrial (HAGH) of Gallus gallus (Chicken).